Consider the following 139-residue polypeptide: Ribonuclease P protein component (139 aa).

It belongs to the RnpA family. Consists of a catalytic RNA component (M1 or rnpB) and a protein subunit.

It carries out the reaction Endonucleolytic cleavage of RNA, removing 5'-extranucleotides from tRNA precursor.. Functionally, RNaseP catalyzes the removal of the 5'-leader sequence from pre-tRNA to produce the mature 5'-terminus. It can also cleave other RNA substrates such as 4.5S RNA. The protein component plays an auxiliary but essential role in vivo by binding to the 5'-leader sequence and broadening the substrate specificity of the ribozyme. The sequence is that of Ribonuclease P protein component from Chlamydia felis (strain Fe/C-56) (Chlamydophila felis).